Here is a 489-residue protein sequence, read N- to C-terminus: Betaine aldehyde dehydrogenase (489 aa).

Residues Thr26 and Asp93 each coordinate K(+). Residue 150-152 (GAW) coordinates NAD(+). Lys162 (charge relay system) is an active-site residue. Residue 176–179 (KPSE) coordinates NAD(+). Residue Val180 coordinates K(+). Residue 229–232 (GVET) participates in NAD(+) binding. A K(+)-binding site is contributed by Leu245. Catalysis depends on Glu251, which acts as the Proton acceptor. Residues Gly253, Cys285, and Glu386 each contribute to the NAD(+) site. Residue Cys285 is the Nucleophile of the active site. Cys285 carries the post-translational modification Cysteine sulfenic acid (-SOH). Residues Lys456 and Gly459 each contribute to the K(+) site. Glu463 functions as the Charge relay system in the catalytic mechanism.

Belongs to the aldehyde dehydrogenase family. As to quaternary structure, dimer of dimers. Requires K(+) as cofactor.

The catalysed reaction is betaine aldehyde + NAD(+) + H2O = glycine betaine + NADH + 2 H(+). It functions in the pathway amine and polyamine biosynthesis; betaine biosynthesis via choline pathway; betaine from betaine aldehyde: step 1/1. Functionally, involved in the biosynthesis of the osmoprotectant glycine betaine. Catalyzes the irreversible oxidation of betaine aldehyde to the corresponding acid. In Burkholderia pseudomallei (strain K96243), this protein is Betaine aldehyde dehydrogenase.